The sequence spans 586 residues: A-type ATP synthase subunit A (586 aa).

ATP is bound at residue 238-245; it reads GPFGSGKT.

The protein belongs to the ATPase alpha/beta chains family. As to quaternary structure, has multiple subunits with at least A(3), B(3), C, D, E, F, H, I and proteolipid K(x).

It is found in the cell membrane. It catalyses the reaction ATP + H2O + 4 H(+)(in) = ADP + phosphate + 5 H(+)(out). Component of the A-type ATP synthase that produces ATP from ADP in the presence of a proton gradient across the membrane. The A chain is the catalytic subunit. This Haloferax volcanii (strain ATCC 29605 / DSM 3757 / JCM 8879 / NBRC 14742 / NCIMB 2012 / VKM B-1768 / DS2) (Halobacterium volcanii) protein is A-type ATP synthase subunit A.